The following is a 65-amino-acid chain: Small ribosomal subunit protein eS31 (65 aa).

4 residues coordinate Zn(2+): C36, C39, C55, and C58. The C4-type zinc finger occupies 36–58 (CPKCGSVMAFHKEPVPRWHCGKC).

This sequence belongs to the eukaryotic ribosomal protein eS31 family. Part of the 30S ribosomal subunit. Requires Zn(2+) as cofactor.

The chain is Small ribosomal subunit protein eS31 from Pyrobaculum aerophilum (strain ATCC 51768 / DSM 7523 / JCM 9630 / CIP 104966 / NBRC 100827 / IM2).